The following is a 729-amino-acid chain: Fatty acid oxidation complex subunit alpha (729 aa).

Positions 1–189 (MLYKGDTLYL…KIGLVDGVVK (189 aa)) are enoyl-CoA hydratase/isomerase. Aspartate 296 contacts substrate. Residues 311–729 (ETPKQAAVLG…ARPVGDLKTA (419 aa)) are 3-hydroxyacyl-CoA dehydrogenase. Residues methionine 324, aspartate 343, 400–402 (VVE), lysine 407, and serine 429 each bind NAD(+). Residue histidine 450 is the For 3-hydroxyacyl-CoA dehydrogenase activity of the active site. NAD(+) is bound at residue asparagine 453. Substrate is bound by residues asparagine 500 and tyrosine 660. The disordered stretch occupies residues 708–729 (RHNEPYYPPVEPARPVGDLKTA).

The protein in the N-terminal section; belongs to the enoyl-CoA hydratase/isomerase family. In the C-terminal section; belongs to the 3-hydroxyacyl-CoA dehydrogenase family. In terms of assembly, heterotetramer of two alpha chains (FadB) and two beta chains (FadA).

It carries out the reaction a (3S)-3-hydroxyacyl-CoA + NAD(+) = a 3-oxoacyl-CoA + NADH + H(+). The catalysed reaction is a (3S)-3-hydroxyacyl-CoA = a (2E)-enoyl-CoA + H2O. It catalyses the reaction a 4-saturated-(3S)-3-hydroxyacyl-CoA = a (3E)-enoyl-CoA + H2O. The enzyme catalyses (3S)-3-hydroxybutanoyl-CoA = (3R)-3-hydroxybutanoyl-CoA. It carries out the reaction a (3Z)-enoyl-CoA = a 4-saturated (2E)-enoyl-CoA. The catalysed reaction is a (3E)-enoyl-CoA = a 4-saturated (2E)-enoyl-CoA. Its pathway is lipid metabolism; fatty acid beta-oxidation. In terms of biological role, involved in the aerobic and anaerobic degradation of long-chain fatty acids via beta-oxidation cycle. Catalyzes the formation of 3-oxoacyl-CoA from enoyl-CoA via L-3-hydroxyacyl-CoA. It can also use D-3-hydroxyacyl-CoA and cis-3-enoyl-CoA as substrate. This Escherichia coli (strain SMS-3-5 / SECEC) protein is Fatty acid oxidation complex subunit alpha.